Consider the following 222-residue polypeptide: Large ribosomal subunit protein uL1 (222 aa).

It belongs to the universal ribosomal protein uL1 family. In terms of assembly, part of the 50S ribosomal subunit.

Its function is as follows. Binds directly to 23S rRNA. Probably involved in E site tRNA release. Protein L1 is also a translational repressor protein, it controls the translation of its operon by binding to its mRNA. The chain is Large ribosomal subunit protein uL1 from Pyrobaculum calidifontis (strain DSM 21063 / JCM 11548 / VA1).